We begin with the raw amino-acid sequence, 334 residues long: Protein translocase subunit SecF (334 aa).

The next 6 helical transmembrane spans lie at 18 to 38 (VAAG…AVTG), 144 to 164 (GAAM…AIRF), 168 to 190 (FGLA…IKIF), 195 to 217 (SLTV…IIIF), 258 to 278 (ATLA…WVMA), and 279 to 299 (FGVV…LLWI).

This sequence belongs to the SecD/SecF family. SecF subfamily. Forms a complex with SecD. Part of the essential Sec protein translocation apparatus which comprises SecA, SecYEG and auxiliary proteins SecDF. Other proteins may also be involved.

Its subcellular location is the cell inner membrane. In terms of biological role, part of the Sec protein translocase complex. Interacts with the SecYEG preprotein conducting channel. SecDF uses the proton motive force (PMF) to complete protein translocation after the ATP-dependent function of SecA. The protein is Protein translocase subunit SecF of Gemmatimonas aurantiaca (strain DSM 14586 / JCM 11422 / NBRC 100505 / T-27).